A 686-amino-acid polypeptide reads, in one-letter code: Band 4.1-like protein 4A (686 aa).

An FERM domain is found at F11–E299. The residue at position 304 (S304) is a Phosphoserine. Residues R331–T686 form a disordered region. Positions A357–N376 are enriched in polar residues. Residues S389, S393, and S402 each carry the phosphoserine modification. Positions G418–S428 are enriched in polar residues. Residues R479–E489 are compositionally biased toward low complexity. Basic and acidic residues-rich tracts occupy residues V518–Q527 and Q547–V561. Positions I588–R601 are enriched in basic residues. Basic and acidic residues predominate over residues G648–P658. Positions T673–T686 are enriched in polar residues.

In terms of tissue distribution, expressed in many tissues. High levels of expression in brain, liver, thymus and peripheral blood leukocytes and low levels of expression in heart, kidney, testis and colon.

It localises to the cytoplasm. It is found in the cytoskeleton. The protein is Band 4.1-like protein 4A of Homo sapiens (Human).